The chain runs to 64 residues: Large ribosomal subunit protein uL30 (64 aa).

It belongs to the universal ribosomal protein uL30 family. Part of the 50S ribosomal subunit.

The sequence is that of Large ribosomal subunit protein uL30 from Rhodopseudomonas palustris (strain HaA2).